A 539-amino-acid polypeptide reads, in one-letter code: 3-methylmercaptopropionyl-CoA ligase (539 aa).

T185 lines the Mg(2+) pocket. H231, G303, H324, A325, and S329 together coordinate ATP. E330 contributes to the Mg(2+) binding site. ATP is bound by residues Q359, D417, R432, and K523.

Belongs to the ATP-dependent AMP-binding enzyme family. Homodimer. It depends on Mg(2+) as a cofactor.

The enzyme catalyses 3-(methylsulfanyl)propanoate + ATP + CoA = 3-(methylsulfanyl)propanoyl-CoA + AMP + diphosphate. Its activity is regulated as follows. ADP acts as a competitive inhibitor and inhibits the ligase activity. Involved in the assimilation of dimethylsulphoniopropionate (DMSP), an important compound in the fixation of carbon in marine phytoplankton. Catalyzes the ATP-dependent ligation of methylmercaptopropionate (MMPA) and CoA to yield methylmercaptopropionate-CoA (MMPA-CoA). The sequence is that of 3-methylmercaptopropionyl-CoA ligase from Ruegeria lacuscaerulensis (strain DSM 11314 / KCTC 2953 / ITI-1157) (Silicibacter lacuscaerulensis).